A 346-amino-acid polypeptide reads, in one-letter code: Probable long-chain-alcohol O-fatty-acyltransferase 6 (346 aa).

8 helical membrane-spanning segments follow: residues 7–27 (LFIQVWVSAIISVTYCYYLTP), 36–56 (LLSVLPVCVLFLIIPIFFSTV), 59–79 (SFTIAFFLSGLAVPKLILFAL), 116–136 (FPKWVFALKVFIFGALLLQAY), 146–166 (FLLGLYALHIYLELEISLTLI), 228–248 (FFAIFATFLVSGVAHEILYFY), 255–275 (TWEVTWFFVLHGFCMAAEVAL), and 289–309 (PAVSRLLTVGFVFVTGVWLFS).

It belongs to the wax synthase family.

Its subcellular location is the membrane. It catalyses the reaction a long chain fatty alcohol + a fatty acyl-CoA = a wax ester + CoA. Its function is as follows. Catalyzes the final step in the synthesis of long-chain linear esters (waxes). This Arabidopsis thaliana (Mouse-ear cress) protein is Probable long-chain-alcohol O-fatty-acyltransferase 6 (AT6).